The following is a 306-amino-acid chain: UDP-3-O-acyl-N-acetylglucosamine deacetylase (306 aa).

Zn(2+) is bound by residues H79, H239, and D243. H266 serves as the catalytic Proton donor.

It belongs to the LpxC family. Zn(2+) is required as a cofactor.

It carries out the reaction a UDP-3-O-[(3R)-3-hydroxyacyl]-N-acetyl-alpha-D-glucosamine + H2O = a UDP-3-O-[(3R)-3-hydroxyacyl]-alpha-D-glucosamine + acetate. It functions in the pathway glycolipid biosynthesis; lipid IV(A) biosynthesis; lipid IV(A) from (3R)-3-hydroxytetradecanoyl-[acyl-carrier-protein] and UDP-N-acetyl-alpha-D-glucosamine: step 2/6. In terms of biological role, catalyzes the hydrolysis of UDP-3-O-myristoyl-N-acetylglucosamine to form UDP-3-O-myristoylglucosamine and acetate, the committed step in lipid A biosynthesis. This is UDP-3-O-acyl-N-acetylglucosamine deacetylase from Haemophilus ducreyi (strain 35000HP / ATCC 700724).